Consider the following 1382-residue polypeptide: Insulin receptor (1382 aa).

A signal peptide spans 1–27; the sequence is MATGGRRGAAAAPLLVAVAALLLGAAG. Extracellular segments lie at residues 28-758 and 763-956; these read HLYP…PRPS and SLGD…NIAK. Cys35 and Cys53 are disulfide-bonded. N-linked (GlcNAc...) asparagine glycosylation is found at Asn43, Asn52, Asn105, and Asn138. Intrachain disulfides connect Cys153–Cys182, Cys186–Cys209, Cys196–Cys215, Cys219–Cys228, Cys223–Cys234, Cys235–Cys243, Cys239–Cys252, Cys255–Cys264, and Cys268–Cys280. The N-linked (GlcNAc...) asparagine glycan is linked to Asn242. A glycan (N-linked (GlcNAc...) asparagine) is linked at Asn282. 5 cysteine pairs are disulfide-bonded: Cys286–Cys311, Cys293–Cys301, Cys315–Cys328, Cys331–Cys335, and Cys339–Cys360. The N-linked (GlcNAc...) asparagine glycan is linked to Asn322. N-linked (GlcNAc...) asparagine glycosylation is present at Asn364. A Phosphoserine modification is found at Ser400. Tyr401 carries the post-translational modification Phosphotyrosine. Ser407 is modified (phosphoserine). N-linked (GlcNAc...) asparagine glycans are attached at residues Asn424 and Asn445. An intrachain disulfide couples Cys462 to Cys495. Residues Asn541, Asn633, Asn651, and Asn698 are each glycosylated (N-linked (GlcNAc...) asparagine). A Fibronectin type-III 1 domain is found at 624–726; sequence VPLDPISVSN…SQILKELEES (103 aa). 2 cysteine pairs are disulfide-bonded: Cys674/Cys899 and Cys825/Cys834. The segment at 686-708 is disordered; the sequence is SPPFESEDSQKHNQSEYEDSAGE. Positions 733–741 are insulin-binding; it reads EDYLHNVVF. The interval 746–766 is disordered; it reads TSSGTGAEDPRPSRKRRSLGD. 2 consecutive Fibronectin type-III domains span residues 757–842 and 853–947; these read PSRK…YVSA and IVGP…VTDY. Residues Asn769 and Asn782 are each glycosylated (N-linked (GlcNAc...) asparagine). Residues Asn920 and Asn933 are each glycosylated (N-linked (GlcNAc...) asparagine). The chain crosses the membrane as a helical span at residues 957 to 979; it reads IIIGPLIFVFLFSVVIGSIYLFL. The Cytoplasmic segment spans residues 980-1382; sequence RKRQPDGPLG…ILTLPRSNPS (403 aa). Phosphotyrosine; by autocatalysis is present on residues Tyr992, Tyr999, and Tyr1011. A region of interest (important for interaction with IRS1, SHC1 and STAT5B) is located at residue Tyr999. In terms of domain architecture, Protein kinase spans 1023–1298; that stretch reads ITLLRELGQG…LLKDDLHPSF (276 aa). Residues Ser1033 and Lys1057 each contribute to the ATP site. A Glycyl lysine isopeptide (Lys-Gly) (interchain with G-Cter in ubiquitin) cross-link involves residue Lys1079. Cys1083 is modified (S-nitrosocysteine). Position 1104–1110 (1104–1110) interacts with ATP; that stretch reads ELMAHGD. The Proton donor/acceptor role is filled by Asp1159. Residues 1163 to 1164 and Asp1177 contribute to the ATP site; that span reads RN. A phosphotyrosine; by autocatalysis mark is found at Tyr1185, Tyr1189, Tyr1190, Tyr1355, and Tyr1361. The segment at 1360 to 1382 is disordered; it reads PYTHMNGGKKNGRILTLPRSNPS. Positions 1361–1364 are PIK3R1-binding; the sequence is YTHM.

Belongs to the protein kinase superfamily. Tyr protein kinase family. Insulin receptor subfamily. As to quaternary structure, tetramer of 2 alpha and 2 beta chains linked by disulfide bonds. The alpha chains carry the insulin-binding regions, while the beta chains carry the kinase domain. Forms a hybrid receptor with IGF1R, the hybrid is a tetramer consisting of 1 alpha chain and 1 beta chain of INSR and 1 alpha chain and 1 beta chain of IGF1R. Interacts with SORBS1 but dissociates from it following insulin stimulation. Binds SH2B2. Activated form of INSR interacts (via Tyr-999) with the PTB/PID domains of IRS1 and SHC1. The sequences surrounding the phosphorylated NPXY motif contribute differentially to either IRS1 or SHC1 recognition. Interacts (via tyrosines in the C-terminus) with IRS2 (via PTB domain and 591-786 AA); the 591-786 would be the primary anchor of IRS2 to INSR while the PTB domain would have a stabilizing action on the interaction with INSR. Interacts with the SH2 domains of the 85 kDa regulatory subunit of PI3K (PIK3R1) in vitro, when autophosphorylated on tyrosine residues. Interacts with SOCS7. Interacts (via the phosphorylated Tyr-999), with SOCS3. Interacts (via the phosphorylated Tyr-1185, Tyr-1189, Tyr-1190) with SOCS1. Interacts with CAV2 (tyrosine-phosphorylated form); the interaction is increased with 'Tyr-27'phosphorylation of CAV2. Interacts with ARRB2. Interacts with GRB10; this interaction blocks the association between IRS1/IRS2 and INSR, significantly reduces insulin-stimulated tyrosine phosphorylation of IRS1 and IRS2 and thus decreases insulin signaling. Interacts with GRB7. Interacts with PDPK1. Interacts (via Tyr-1190) with GRB14 (via BPS domain); this interaction protects the tyrosines in the activation loop from dephosphorylation, but promotes dephosphorylation of Tyr-999, this results in decreased interaction with, and phosphorylation of, IRS1. Interacts (via subunit alpha) with ENPP1 (via 485-599 AA); this interaction blocks autophosphorylation. Interacts with PTPRE; this interaction is dependent of Tyr-1185, Tyr-1189 and Tyr-1190 of the INSR. Interacts with STAT5B (via SH2 domain). Interacts with PTPRF. Interacts with ATIC; ATIC together with PRKAA2/AMPK2 and HACD3/PTPLAD1 is proposed to be part of a signaling netwok regulating INSR autophosphorylation and endocytosis. Interacts with the cone snail venom insulin Con-Ins G1. Interacts with the insulin receptor SORL1; this interaction strongly increases its surface exposure, hence strengthens insulin signal reception. Interacts (tyrosine phosphorylated) with CCDC88A/GIV (via SH2-like region); binding requires autophosphorylation of the INSR C-terminal region. Interacts with GNAI3; the interaction is probably mediated by CCDC88A/GIV. Interacts with LMBRD1. Interacts (in response to insulin stimulation) with NCK1; this interaction may recruit PTPN1 to mediate INSR dephosphorylation. Interacts with CD248; this interaction diminishes INSR autophosphorylation. Post-translationally, after being transported from the endoplasmic reticulum to the Golgi apparatus, the single glycosylated precursor is further glycosylated and then cleaved, followed by its transport to the plasma membrane. Autophosphorylated on tyrosine residues in response to insulin. Phosphorylation of Tyr-999 is required for binding to IRS1, SHC1 and STAT5B. Dephosphorylated by PTPRE at Tyr-999, Tyr-1185, Tyr-1189 and Tyr-1190. May also be phosphorylated at Tyr-1185 and Tyr-1190 by mTORC2. Dephosphorylated by PTPRF and PTPN1. Dephosphorylated by PTPN2; down-regulates insulin-induced signaling. Dephosphorylation at Tyr-1189 and Tyr-1190 requires the SH2/SH3 adapter protein NCK1, probably to recruit its interaction partner PTPN1. In terms of processing, S-nitrosylation at Cys-1083 by BLVRB inhibits the receptor tyrosine kinase, thereby inhibiting insulin signaling. Post-translationally, ubiquitinated by MARCHF1; leading to degradation thereby reducing surface INSR expression. As to expression, isoform Long and isoform Short are predominantly expressed in tissue targets of insulin metabolic effects: liver, adipose tissue and skeletal muscle but are also expressed in the peripheral nerve, kidney, pulmonary alveoli, pancreatic acini, placenta vascular endothelium, fibroblasts, monocytes, granulocytes, erythrocytes and skin. Isoform Short is preferentially expressed in fetal cells such as fetal fibroblasts, muscle, liver and kidney. Found as a hybrid receptor with IGF1R in muscle, heart, kidney, adipose tissue, skeletal muscle, hepatoma, fibroblasts, spleen and placenta (at protein level). Overexpressed in several tumors, including breast, colon, lung, ovary, and thyroid carcinomas.

It localises to the cell membrane. The protein resides in the late endosome. Its subcellular location is the lysosome. The enzyme catalyses L-tyrosyl-[protein] + ATP = O-phospho-L-tyrosyl-[protein] + ADP + H(+). Activated in response to insulin. Autophosphorylation activates the kinase activity. PTPN1, PTPRE and PTPRF dephosphorylate important tyrosine residues, thereby reducing INSR activity. Inhibited by ENPP1. GRB10 and GRB14 inhibit the catalytic activity of the INSR, they block access of substrates to the activated receptor. SOCS1 and SOCS3 act as negative regulators of INSR activity, they bind to the activated INRS and interfere with the phosphorylation of INSR substrates. Receptor tyrosine kinase which mediates the pleiotropic actions of insulin. Binding of insulin leads to phosphorylation of several intracellular substrates, including, insulin receptor substrates (IRS1, 2, 3, 4), SHC, GAB1, CBL and other signaling intermediates. Each of these phosphorylated proteins serve as docking proteins for other signaling proteins that contain Src-homology-2 domains (SH2 domain) that specifically recognize different phosphotyrosine residues, including the p85 regulatory subunit of PI3K and SHP2. Phosphorylation of IRSs proteins lead to the activation of two main signaling pathways: the PI3K-AKT/PKB pathway, which is responsible for most of the metabolic actions of insulin, and the Ras-MAPK pathway, which regulates expression of some genes and cooperates with the PI3K pathway to control cell growth and differentiation. Binding of the SH2 domains of PI3K to phosphotyrosines on IRS1 leads to the activation of PI3K and the generation of phosphatidylinositol-(3, 4, 5)-triphosphate (PIP3), a lipid second messenger, which activates several PIP3-dependent serine/threonine kinases, such as PDPK1 and subsequently AKT/PKB. The net effect of this pathway is to produce a translocation of the glucose transporter SLC2A4/GLUT4 from cytoplasmic vesicles to the cell membrane to facilitate glucose transport. Moreover, upon insulin stimulation, activated AKT/PKB is responsible for: anti-apoptotic effect of insulin by inducing phosphorylation of BAD; regulates the expression of gluconeogenic and lipogenic enzymes by controlling the activity of the winged helix or forkhead (FOX) class of transcription factors. Another pathway regulated by PI3K-AKT/PKB activation is mTORC1 signaling pathway which regulates cell growth and metabolism and integrates signals from insulin. AKT mediates insulin-stimulated protein synthesis by phosphorylating TSC2 thereby activating mTORC1 pathway. The Ras/RAF/MAP2K/MAPK pathway is mainly involved in mediating cell growth, survival and cellular differentiation of insulin. Phosphorylated IRS1 recruits GRB2/SOS complex, which triggers the activation of the Ras/RAF/MAP2K/MAPK pathway. In addition to binding insulin, the insulin receptor can bind insulin-like growth factors (IGFI and IGFII). Isoform Short has a higher affinity for IGFII binding. When present in a hybrid receptor with IGF1R, binds IGF1. PubMed:12138094 shows that hybrid receptors composed of IGF1R and INSR isoform Long are activated with a high affinity by IGF1, with low affinity by IGF2 and not significantly activated by insulin, and that hybrid receptors composed of IGF1R and INSR isoform Short are activated by IGF1, IGF2 and insulin. In contrast, PubMed:16831875 shows that hybrid receptors composed of IGF1R and INSR isoform Long and hybrid receptors composed of IGF1R and INSR isoform Short have similar binding characteristics, both bind IGF1 and have a low affinity for insulin. In adipocytes, inhibits lipolysis. This is Insulin receptor (INSR) from Homo sapiens (Human).